The primary structure comprises 395 residues: Thyroid hormone receptor beta (395 aa).

The modulating stretch occupies residues 1–31 (MSEQADKCNSRWKDEAMQNGYIPSYLDKDEL). A DNA-binding region (nuclear receptor) is located at residues 29–106 (DELCVVCGDK…VGMATDLVLD (78 aa)). Zn(2+) is bound by residues cysteine 32, cysteine 35, cysteine 49, cysteine 52, cysteine 70, cysteine 76, cysteine 86, and cysteine 89. 2 NR C4-type zinc fingers span residues 32-52 (CVVC…CEGC) and 70-89 (CKYE…CQEC). Residues 142-395 (EEWEMIRVVT…PPLFLEVFED (254 aa)) enclose the NR LBD domain. 3,3',5-triiodo-L-thyronine is bound by residues arginine 216, asparagine 265, and histidine 369.

This sequence belongs to the nuclear hormone receptor family. NR1 subfamily. In terms of assembly, interacts (via the ligand-binding domain) with ncoa2. Widely expressed in a range of adult tissues including the brain, eye, fin, gill, intestine, liver, swim bladder and ovary. In the eye, expressed in the outer nuclear layer of the retina.

The protein resides in the nucleus. Functionally, nuclear hormone receptor that can act as a repressor or activator of transcription. High affinity receptor for the thyroid gland hormone triiodothyronine (T3). Transactivating activity is ligand-dependent, and is repressed in the absence of T3. This chain is Thyroid hormone receptor beta (thrb), found in Danio rerio (Zebrafish).